Here is a 526-residue protein sequence, read N- to C-terminus: Probable polyol transporter 4 (526 aa).

2 disordered regions span residues Met-1–Val-21 and Tyr-28–Arg-47. The segment covering Gln-29–Arg-47 has biased composition (basic and acidic residues). Transmembrane regions (helical) follow at residues Ser-63–Ile-83, Val-92–Gly-112, Met-125–Phe-145, Thr-153–Ile-173, Gly-180–Ser-200, Ile-215–Pro-235, Met-300–Val-320, Ala-340–Ile-360, Val-371–Gly-391, Leu-395–Met-415, Ala-437–Val-457, and Gly-465–Val-485.

Belongs to the major facilitator superfamily. Sugar transporter (TC 2.A.1.1) family.

It localises to the membrane. Plasma membrane sugar-proton symporter. The protein is Probable polyol transporter 4 (PLT4) of Arabidopsis thaliana (Mouse-ear cress).